Here is a 525-residue protein sequence, read N- to C-terminus: GMP synthase [glutamine-hydrolyzing] (525 aa).

The 199-residue stretch at 9-207 folds into the Glutamine amidotransferase type-1 domain; it reads RILILDFGSQ…VQDICGCEAL (199 aa). Cysteine 86 acts as the Nucleophile in catalysis. Active-site residues include histidine 181 and glutamate 183. The GMPS ATP-PPase domain occupies 208 to 400; the sequence is WTPSNIVEDA…LGLPYDMVYR (193 aa). 235–241 is an ATP binding site; it reads SGGVDSS.

As to quaternary structure, homodimer.

The catalysed reaction is XMP + L-glutamine + ATP + H2O = GMP + L-glutamate + AMP + diphosphate + 2 H(+). The protein operates within purine metabolism; GMP biosynthesis; GMP from XMP (L-Gln route): step 1/1. In terms of biological role, catalyzes the synthesis of GMP from XMP. This is GMP synthase [glutamine-hydrolyzing] from Pseudomonas putida (strain W619).